The sequence spans 206 residues: FKBP-type 22 kDa peptidyl-prolyl cis-trans isomerase (206 aa).

The PPIase FKBP-type domain occupies 120-206; that stretch reads TDRVRVHYTG…VFEVELLEIL (87 aa).

Homodimer.

It is found in the cytoplasm. The protein resides in the periplasm. The catalysed reaction is [protein]-peptidylproline (omega=180) = [protein]-peptidylproline (omega=0). With respect to regulation, strongly inhibited by FK506. Functionally, PPIases accelerate the folding of proteins. Catalyzes the cis-trans isomerization of proline imidic peptide bonds in oligopeptides. Displays a preference for substrates with a lysyl residue in the P1 position. In Escherichia coli (strain K12), this protein is FKBP-type 22 kDa peptidyl-prolyl cis-trans isomerase (fklB).